The chain runs to 72 residues: Translation initiation factor IF-1 (72 aa).

Residues 1–72 (MAKEDSIEMQ…TKGRIIFRAR (72 aa)) form the S1-like domain.

This sequence belongs to the IF-1 family. As to quaternary structure, component of the 30S ribosomal translation pre-initiation complex which assembles on the 30S ribosome in the order IF-2 and IF-3, IF-1 and N-formylmethionyl-tRNA(fMet); mRNA recruitment can occur at any time during PIC assembly.

Its subcellular location is the cytoplasm. Functionally, one of the essential components for the initiation of protein synthesis. Stabilizes the binding of IF-2 and IF-3 on the 30S subunit to which N-formylmethionyl-tRNA(fMet) subsequently binds. Helps modulate mRNA selection, yielding the 30S pre-initiation complex (PIC). Upon addition of the 50S ribosomal subunit IF-1, IF-2 and IF-3 are released leaving the mature 70S translation initiation complex. The sequence is that of Translation initiation factor IF-1 from Actinobacillus succinogenes (strain ATCC 55618 / DSM 22257 / CCUG 43843 / 130Z).